A 418-amino-acid polypeptide reads, in one-letter code: Hydroxysqualene dehydroxylase (418 aa).

It belongs to the HpnE family.

It carries out the reaction squalene + FAD + H2O + H(+) = hydroxysqualene + FADH2. Its pathway is secondary metabolite biosynthesis; hopanoid biosynthesis. Functionally, involved in the biosynthesis of the hopanoid precursor squalene (SQ) from farnesyl diphosphate (FPP). Catalyzes the third (last) step, the reduction of hydroxysqualene (HSQ) to SQ. The sequence is that of Hydroxysqualene dehydroxylase from Rhodopseudomonas palustris (strain ATCC BAA-98 / CGA009).